Here is a 237-residue protein sequence, read N- to C-terminus: Uridylate kinase (237 aa).

12-15 (KLSG) contributes to the ATP binding site. The interval 20-25 (GEDGLG) is involved in allosteric activation by GTP. Position 54 (G54) interacts with UMP. Residues G55 and R59 each contribute to the ATP site. Residues D74 and 135–142 (TGNPFFTT) each bind UMP. Residues T162, Y168, and D171 each coordinate ATP.

It belongs to the UMP kinase family. In terms of assembly, homohexamer.

The protein resides in the cytoplasm. The enzyme catalyses UMP + ATP = UDP + ADP. The protein operates within pyrimidine metabolism; CTP biosynthesis via de novo pathway; UDP from UMP (UMPK route): step 1/1. Allosterically activated by GTP. Inhibited by UTP. Its function is as follows. Catalyzes the reversible phosphorylation of UMP to UDP. In Haemophilus influenzae (strain PittGG), this protein is Uridylate kinase.